A 196-amino-acid chain; its full sequence is Probable malonic semialdehyde reductase RutE (196 aa).

It belongs to the nitroreductase family. HadB/RutE subfamily. Requires FMN as cofactor.

The catalysed reaction is 3-hydroxypropanoate + NADP(+) = 3-oxopropanoate + NADPH + H(+). May reduce toxic product malonic semialdehyde to 3-hydroxypropionic acid, which is excreted. This Klebsiella pneumoniae (strain 342) protein is Probable malonic semialdehyde reductase RutE.